The sequence spans 345 residues: Dihydroorotase (345 aa).

His13 and His15 together coordinate Zn(2+). Substrate contacts are provided by residues 15–17 and Asn41; that span reads HLR. Zn(2+) is bound by residues Lys99, His136, and His174. Residue Lys99 is modified to N6-carboxylysine. His136 is a binding site for substrate. Residue Leu219 coordinates substrate. Residue Asp247 coordinates Zn(2+). Residue Asp247 is part of the active site. Positions 251 and 263 each coordinate substrate.

It belongs to the metallo-dependent hydrolases superfamily. DHOase family. Class II DHOase subfamily. As to quaternary structure, homodimer. The cofactor is Zn(2+).

The catalysed reaction is (S)-dihydroorotate + H2O = N-carbamoyl-L-aspartate + H(+). Its pathway is pyrimidine metabolism; UMP biosynthesis via de novo pathway; (S)-dihydroorotate from bicarbonate: step 3/3. Its function is as follows. Catalyzes the reversible cyclization of carbamoyl aspartate to dihydroorotate. In Agrobacterium fabrum (strain C58 / ATCC 33970) (Agrobacterium tumefaciens (strain C58)), this protein is Dihydroorotase.